The chain runs to 420 residues: MIOREX complex component 9 (420 aa).

Transmembrane regions (helical) follow at residues 125–145 (VYKV…TFIL) and 149–169 (IVVI…FFFF).

In terms of assembly, associates with the mitochondrial ribosome.

The protein resides in the mitochondrion. The protein localises to the mitochondrion membrane. Component of MIOREX complexes, large expressome-like assemblies of ribosomes with factors involved in all the steps of post-transcriptional gene expression. In Saccharomyces cerevisiae (strain ATCC 204508 / S288c) (Baker's yeast), this protein is MIOREX complex component 9.